The primary structure comprises 145 residues: Basic phospholipase A2 beta-bungarotoxin A2 chain (145 aa).

Residues 1 to 17 form the signal peptide; sequence MLIFLWCGAVCVSLLGA. Residues 18–25 constitute a propeptide that is removed on maturation; that stretch reads ANIPPHPL. Disulfide bonds link cysteine 52-cysteine 144, cysteine 54-cysteine 70, cysteine 69-cysteine 125, cysteine 76-cysteine 118, cysteine 86-cysteine 111, and cysteine 104-cysteine 116. The Ca(2+) site is built by tyrosine 53, glycine 55, and glycine 57. The active site involves histidine 73. Residue aspartate 74 participates in Ca(2+) binding. Residue aspartate 119 is part of the active site.

The protein belongs to the phospholipase A2 family. Group I subfamily. D49 sub-subfamily. As to quaternary structure, heterodimer; disulfide-linked. The A chains have phospholipase A2 activity and the B chains show homology with the basic protease inhibitors. The A2 chain is found in beta-3 and beta-4 bungarotoxins. Requires Ca(2+) as cofactor. As to expression, expressed by the venom gland.

Its subcellular location is the secreted. It carries out the reaction a 1,2-diacyl-sn-glycero-3-phosphocholine + H2O = a 1-acyl-sn-glycero-3-phosphocholine + a fatty acid + H(+). Its function is as follows. Snake venom phospholipase A2 (PLA2) that inhibits neuromuscular transmission by blocking acetylcholine release from the nerve termini. PLA2 catalyzes the calcium-dependent hydrolysis of the 2-acyl groups in 3-sn-phosphoglycerides. In Bungarus multicinctus (Many-banded krait), this protein is Basic phospholipase A2 beta-bungarotoxin A2 chain.